The primary structure comprises 137 residues: Fructose-bisphosphate aldolase C (137 aa).

The Schiff-base intermediate with dihydroxyacetone-P role is filled by K3.

This sequence belongs to the class I fructose-bisphosphate aldolase family. As to quaternary structure, homotetramer.

The catalysed reaction is beta-D-fructose 1,6-bisphosphate = D-glyceraldehyde 3-phosphate + dihydroxyacetone phosphate. It functions in the pathway carbohydrate degradation; glycolysis; D-glyceraldehyde 3-phosphate and glycerone phosphate from D-glucose: step 4/4. The polypeptide is Fructose-bisphosphate aldolase C (ALDOC) (Gallus gallus (Chicken)).